The following is a 944-amino-acid chain: ATP-dependent helicase fft1 (944 aa).

Disordered regions lie at residues 89-109 and 174-246; these read AAYD…ESSN and SAQK…NSIP. Positions 92–108 are enriched in basic and acidic residues; that stretch reads DPHDQPPERDVSLKESS. Residues 174–184 are compositionally biased toward polar residues; sequence SAQKLNNQPIE. The segment covering 186 to 203 has biased composition (basic and acidic residues); that stretch reads SSVDKENAKRKRYVEEGT. Positions 217-227 are enriched in acidic residues; the sequence is LSDEETNEDDL. Polar residues predominate over residues 230 to 246; sequence QSPTACTTDANIDNSIP. In terms of domain architecture, Helicase ATP-binding spans 426-592; sequence CLMYKAKLSG…ISLLAFMLPK (167 aa). ATP is bound at residue 439-446; it reads DEMGLGKT. The DEGH box motif lies at 543–546; sequence DEGH. The region spanning 766-923 is the Helicase C-terminal domain; it reads KVKKLCSLLK…DSEKIQKEIS (158 aa).

The protein belongs to the SNF2/RAD54 helicase family.

Its subcellular location is the nucleus. It catalyses the reaction ATP + H2O = ADP + phosphate + H(+). DNA helicase that possesses intrinsic ATP-dependent nucleosome-remodeling activity and is required for heterochromatin organization. The sequence is that of ATP-dependent helicase fft1 (fft1) from Schizosaccharomyces pombe (strain 972 / ATCC 24843) (Fission yeast).